A 499-amino-acid polypeptide reads, in one-letter code: Aspartyl/glutamyl-tRNA(Asn/Gln) amidotransferase subunit B (499 aa).

The protein belongs to the GatB/GatE family. GatB subfamily. In terms of assembly, heterotrimer of A, B and C subunits.

It catalyses the reaction L-glutamyl-tRNA(Gln) + L-glutamine + ATP + H2O = L-glutaminyl-tRNA(Gln) + L-glutamate + ADP + phosphate + H(+). It carries out the reaction L-aspartyl-tRNA(Asn) + L-glutamine + ATP + H2O = L-asparaginyl-tRNA(Asn) + L-glutamate + ADP + phosphate + 2 H(+). Allows the formation of correctly charged Asn-tRNA(Asn) or Gln-tRNA(Gln) through the transamidation of misacylated Asp-tRNA(Asn) or Glu-tRNA(Gln) in organisms which lack either or both of asparaginyl-tRNA or glutaminyl-tRNA synthetases. The reaction takes place in the presence of glutamine and ATP through an activated phospho-Asp-tRNA(Asn) or phospho-Glu-tRNA(Gln). The polypeptide is Aspartyl/glutamyl-tRNA(Asn/Gln) amidotransferase subunit B (Bartonella quintana (strain Toulouse) (Rochalimaea quintana)).